Reading from the N-terminus, the 419-residue chain is rRNA methyltransferase 3, mitochondrial (419 aa).

The N-terminal 39 residues, 1–39, are a transit peptide targeting the mitochondrion; sequence MAALCGGMLRGCILKPLGLSGSLQLKRNVRALRRTPVRV. The segment at 42 to 68 is disordered; the sequence is ADEEGRERKQVEASRQRQPRQNESQAC. The span at 44–56 shows a compositional bias: basic and acidic residues; sequence EEGRERKQVEASR. S-adenosyl-L-methionine contacts are provided by G357, I381, and L390.

Belongs to the class IV-like SAM-binding methyltransferase superfamily. RNA methyltransferase TrmH family.

It is found in the mitochondrion. The enzyme catalyses a uridine in rRNA + S-adenosyl-L-methionine = a 2'-O-methyluridine in rRNA + S-adenosyl-L-homocysteine + H(+). Its function is as follows. S-adenosyl-L-methionine-dependent 2'-O-ribose methyltransferase that catalyzes the formation of 2'-O-methylguanosine at position 1370 (Gm1370) in the mitochondrial large subunit ribosomal RNA (mtLSU rRNA), a conserved modification in the peptidyl transferase domain of the mtLSU rRNA. Also required for formation of 2'-O-methyluridine at position 1369 (Um1369) mediated by MRM2. The sequence is that of rRNA methyltransferase 3, mitochondrial from Xenopus laevis (African clawed frog).